A 947-amino-acid chain; its full sequence is Glutamate receptor 2.8 (947 aa).

The N-terminal stretch at 1-26 is a signal peptide; the sequence is MNPKKNNNTFLSYFVCLFLLLEVGLG. At 27 to 577 the chain is on the extracellular side; the sequence is QNQISEIKVG…NTWVFLKPWG (551 aa). N-linked (GlcNAc...) asparagine glycans are attached at residues Asn42, Asn118, Asn333, Asn341, Asn348, Asn420, Asn478, and Asn524. Residues 578-598 form a helical membrane-spanning segment; it reads LDLWVTTACFFVLIGFVVWLF. The Cytoplasmic portion of the chain corresponds to 599-607; sequence EHRVNTDFR. A helical membrane pass occupies residues 608–628; the sequence is GPPHHQIGTSFWFSFSTMVFA. The Cytoplasmic segment spans residues 629–632; the sequence is HREK. The chain crosses the membrane as a helical span at residues 633–653; it reads VVSNLARFVVVVWCFVVLVLT. The Extracellular portion of the chain corresponds to 654–819; sequence QSYTANLTSF…NRLSLRSFWG (166 aa). 4 N-linked (GlcNAc...) asparagine glycosylation sites follow: Asn659, Asn704, Asn723, and Asn779. A helical membrane pass occupies residues 820 to 840; that stretch reads LFLIAGIASFLALLIFVFLFL. The Cytoplasmic portion of the chain corresponds to 841-947; that stretch reads YENRHTLCDD…ESDIECVVEQ (107 aa).

Belongs to the glutamate-gated ion channel (TC 1.A.10.1) family. May form heteromers. In terms of tissue distribution, expressed predominantly in leaves.

The protein localises to the membrane. Its function is as follows. Glutamate-gated receptor that probably acts as a non-selective cation channel. May be involved in light-signal transduction and calcium homeostasis via the regulation of calcium influx into cells. The sequence is that of Glutamate receptor 2.8 (GLR2.8) from Arabidopsis thaliana (Mouse-ear cress).